The chain runs to 78 residues: NAD(P)H-quinone oxidoreductase subunit O (78 aa).

The protein belongs to the complex I NdhO subunit family. In terms of assembly, NDH-1 can be composed of about 15 different subunits; different subcomplexes with different compositions have been identified which probably have different functions.

It is found in the cell inner membrane. The enzyme catalyses a plastoquinone + NADH + (n+1) H(+)(in) = a plastoquinol + NAD(+) + n H(+)(out). It catalyses the reaction a plastoquinone + NADPH + (n+1) H(+)(in) = a plastoquinol + NADP(+) + n H(+)(out). In terms of biological role, NDH-1 shuttles electrons from an unknown electron donor, via FMN and iron-sulfur (Fe-S) centers, to quinones in the respiratory and/or the photosynthetic chain. The immediate electron acceptor for the enzyme in this species is believed to be plastoquinone. Couples the redox reaction to proton translocation, and thus conserves the redox energy in a proton gradient. Cyanobacterial NDH-1 also plays a role in inorganic carbon-concentration. This Gloeobacter violaceus (strain ATCC 29082 / PCC 7421) protein is NAD(P)H-quinone oxidoreductase subunit O.